Consider the following 98-residue polypeptide: NADH-ubiquinone oxidoreductase chain 4L (98 aa).

Transmembrane regions (helical) follow at residues 2 to 22, 26 to 46, and 59 to 79; these read SPAV…TLMF, LMST…LATI, and IPIA…ALLA.

This sequence belongs to the complex I subunit 4L family. As to quaternary structure, core subunit of respiratory chain NADH dehydrogenase (Complex I) which is composed of 45 different subunits.

The protein localises to the mitochondrion inner membrane. It catalyses the reaction a ubiquinone + NADH + 5 H(+)(in) = a ubiquinol + NAD(+) + 4 H(+)(out). Core subunit of the mitochondrial membrane respiratory chain NADH dehydrogenase (Complex I) which catalyzes electron transfer from NADH through the respiratory chain, using ubiquinone as an electron acceptor. Part of the enzyme membrane arm which is embedded in the lipid bilayer and involved in proton translocation. The chain is NADH-ubiquinone oxidoreductase chain 4L (MT-ND4L) from Alexandromys kikuchii (Taiwan vole).